The following is a 343-amino-acid chain: Glyceraldehyde-3-phosphate dehydrogenase (343 aa).

Residues 13 to 14 (TI) and Gly-111 contribute to the NAD(+) site. 140-142 (SCN) contributes to the D-glyceraldehyde 3-phosphate binding site. Cys-141 functions as the Nucleophile in the catalytic mechanism. Residue Arg-169 participates in NAD(+) binding. 195–196 (HA) lines the D-glyceraldehyde 3-phosphate pocket. Gln-303 contacts NAD(+).

It belongs to the glyceraldehyde-3-phosphate dehydrogenase family. Homotetramer.

It is found in the cytoplasm. It carries out the reaction D-glyceraldehyde 3-phosphate + phosphate + NADP(+) = (2R)-3-phospho-glyceroyl phosphate + NADPH + H(+). The enzyme catalyses D-glyceraldehyde 3-phosphate + phosphate + NAD(+) = (2R)-3-phospho-glyceroyl phosphate + NADH + H(+). The protein operates within carbohydrate degradation; glycolysis; pyruvate from D-glyceraldehyde 3-phosphate: step 1/5. The polypeptide is Glyceraldehyde-3-phosphate dehydrogenase (Sulfolobus acidocaldarius (strain ATCC 33909 / DSM 639 / JCM 8929 / NBRC 15157 / NCIMB 11770)).